The chain runs to 413 residues: Multifunctional CCA protein (413 aa).

ATP contacts are provided by G8 and R11. CTP is bound by residues G8 and R11. The Mg(2+) site is built by D21 and D23. Residues R91, R137, and R140 each coordinate ATP. Positions 91, 137, and 140 each coordinate CTP. The region spanning 228 to 329 is the HD domain; that stretch reads TGIHTLMTLS…VKLFDSIDAW (102 aa).

This sequence belongs to the tRNA nucleotidyltransferase/poly(A) polymerase family. Bacterial CCA-adding enzyme type 1 subfamily. As to quaternary structure, monomer. Can also form homodimers and oligomers. Mg(2+) serves as cofactor. It depends on Ni(2+) as a cofactor.

It catalyses the reaction a tRNA precursor + 2 CTP + ATP = a tRNA with a 3' CCA end + 3 diphosphate. The catalysed reaction is a tRNA with a 3' CCA end + 2 CTP + ATP = a tRNA with a 3' CCACCA end + 3 diphosphate. In terms of biological role, catalyzes the addition and repair of the essential 3'-terminal CCA sequence in tRNAs without using a nucleic acid template. Adds these three nucleotides in the order of C, C, and A to the tRNA nucleotide-73, using CTP and ATP as substrates and producing inorganic pyrophosphate. tRNA 3'-terminal CCA addition is required both for tRNA processing and repair. Also involved in tRNA surveillance by mediating tandem CCA addition to generate a CCACCA at the 3' terminus of unstable tRNAs. While stable tRNAs receive only 3'-terminal CCA, unstable tRNAs are marked with CCACCA and rapidly degraded. This is Multifunctional CCA protein from Citrobacter koseri (strain ATCC BAA-895 / CDC 4225-83 / SGSC4696).